The sequence spans 321 residues: D-alanine--D-alanine ligase (321 aa).

The ATP-grasp domain occupies 121 to 315 (RSWFLTNNIN…FTNLIEEIIK (195 aa)). An ATP-binding site is contributed by 147-199 (PVKRPYVIKPLTQGSSIGVEVIFEEDDFNFADYNFPYGYQVIIEQYIKGRELQ). Positions 268, 282, and 284 each coordinate Mg(2+).

Belongs to the D-alanine--D-alanine ligase family. Requires Mg(2+) as cofactor. Mn(2+) serves as cofactor.

It is found in the cytoplasm. The enzyme catalyses 2 D-alanine + ATP = D-alanyl-D-alanine + ADP + phosphate + H(+). It participates in cell wall biogenesis; peptidoglycan biosynthesis. Functionally, cell wall formation. The chain is D-alanine--D-alanine ligase from Rickettsia felis (strain ATCC VR-1525 / URRWXCal2) (Rickettsia azadi).